The following is a 293-amino-acid chain: Ribosomal protein L11 methyltransferase (293 aa).

The S-adenosyl-L-methionine site is built by Thr145, Gly166, Asp188, and Asn230.

Belongs to the methyltransferase superfamily. PrmA family.

The protein localises to the cytoplasm. The catalysed reaction is L-lysyl-[protein] + 3 S-adenosyl-L-methionine = N(6),N(6),N(6)-trimethyl-L-lysyl-[protein] + 3 S-adenosyl-L-homocysteine + 3 H(+). Functionally, methylates ribosomal protein L11. The polypeptide is Ribosomal protein L11 methyltransferase (Serratia proteamaculans (strain 568)).